A 160-amino-acid polypeptide reads, in one-letter code: Inner membrane protein YcdZ (160 aa).

5 helical membrane-spanning segments follow: residues 20-42 (WGAV…YFAC), 50-70 (LLIS…IIHG), 72-92 (ALAP…AFLM), 99-119 (LLLS…AGQG), and 123-143 (LVLP…NSGL).

To E.coli YahC.

It localises to the cell inner membrane. This chain is Inner membrane protein YcdZ (ycdZ), found in Salmonella typhimurium (strain LT2 / SGSC1412 / ATCC 700720).